The following is a 334-amino-acid chain: Holliday junction branch migration complex subunit RuvB (334 aa).

The segment at 1–182 (MNERMVDQSM…FGVHLRLEYY (182 aa)) is large ATPase domain (RuvB-L). ATP contacts are provided by residues Leu-21, Arg-22, Gly-63, Lys-66, Thr-67, Thr-68, 129 to 131 (EDF), Arg-172, Tyr-182, and Arg-219. Thr-67 is a Mg(2+) binding site. Positions 183 to 253 (NESDLKEIII…TTKHALGLLQ (71 aa)) are small ATPAse domain (RuvB-S). A head domain (RuvB-H) region spans residues 256-334 (QHGLDYIDHK…HFAKSNEERG (79 aa)). Positions 292, 311, and 316 each coordinate DNA.

The protein belongs to the RuvB family. Homohexamer. Forms an RuvA(8)-RuvB(12)-Holliday junction (HJ) complex. HJ DNA is sandwiched between 2 RuvA tetramers; dsDNA enters through RuvA and exits via RuvB. An RuvB hexamer assembles on each DNA strand where it exits the tetramer. Each RuvB hexamer is contacted by two RuvA subunits (via domain III) on 2 adjacent RuvB subunits; this complex drives branch migration. In the full resolvosome a probable DNA-RuvA(4)-RuvB(12)-RuvC(2) complex forms which resolves the HJ.

The protein resides in the cytoplasm. It catalyses the reaction ATP + H2O = ADP + phosphate + H(+). Functionally, the RuvA-RuvB-RuvC complex processes Holliday junction (HJ) DNA during genetic recombination and DNA repair, while the RuvA-RuvB complex plays an important role in the rescue of blocked DNA replication forks via replication fork reversal (RFR). RuvA specifically binds to HJ cruciform DNA, conferring on it an open structure. The RuvB hexamer acts as an ATP-dependent pump, pulling dsDNA into and through the RuvAB complex. RuvB forms 2 homohexamers on either side of HJ DNA bound by 1 or 2 RuvA tetramers; 4 subunits per hexamer contact DNA at a time. Coordinated motions by a converter formed by DNA-disengaged RuvB subunits stimulates ATP hydrolysis and nucleotide exchange. Immobilization of the converter enables RuvB to convert the ATP-contained energy into a lever motion, pulling 2 nucleotides of DNA out of the RuvA tetramer per ATP hydrolyzed, thus driving DNA branch migration. The RuvB motors rotate together with the DNA substrate, which together with the progressing nucleotide cycle form the mechanistic basis for DNA recombination by continuous HJ branch migration. Branch migration allows RuvC to scan DNA until it finds its consensus sequence, where it cleaves and resolves cruciform DNA. The sequence is that of Holliday junction branch migration complex subunit RuvB from Staphylococcus aureus (strain N315).